The sequence spans 403 residues: 26S proteasome regulatory subunit 8 homolog (403 aa).

186 to 193 (GPPGTGKT) provides a ligand contact to ATP.

Belongs to the AAA ATPase family.

It localises to the cytoplasm. It is found in the nucleus. The 26S proteasome is involved in the ATP-dependent degradation of ubiquitinated proteins. The regulatory (or ATPase) complex confers ATP dependency and substrate specificity to the 26S complex. The sequence is that of 26S proteasome regulatory subunit 8 homolog (let1) from Schizosaccharomyces pombe (strain 972 / ATCC 24843) (Fission yeast).